The sequence spans 147 residues: Spermidine export protein MdtJ (147 aa).

A run of 4 helical transmembrane segments spans residues Met-1–Met-21, Thr-31–Val-51, Val-54–Phe-74, and Glu-81–Val-101. The segment at Thr-105–Ala-147 is disordered.

The protein belongs to the drug/metabolite transporter (DMT) superfamily. Small multidrug resistance (SMR) (TC 2.A.7.1) family. MdtJ subfamily. Forms a complex with MdtI.

The protein localises to the cell inner membrane. Catalyzes the excretion of spermidine. The sequence is that of Spermidine export protein MdtJ from Yersinia pestis bv. Antiqua (strain Antiqua).